Here is a 650-residue protein sequence, read N- to C-terminus: AP-1-like transcription factor YAP1 (650 aa).

The segment at 1–89 is disordered; it reads MSVSTAKRSL…AFRERKERKM (89 aa). 3 positions are modified to phosphoserine: S9, S14, and S17. Composition is skewed to basic and acidic residues over residues 22–50, 58–68, and 80–89; these read EGSK…EQPK, KKQDLDPETKQ, and AFRERKERKM. 2 short sequence motifs (bipartite nuclear localization signal) span residues 35 to 42 and 68 to 75; these read HRRTGTRD and QKRTAQNR. Positions 64 to 127 constitute a bZIP domain; the sequence is PETKQKRTAQ…ITLVNELKKY (64 aa). Residues 67–90 are basic motif; the sequence is KQKRTAQNRAAQRAFRERKERKMK. Positions 92–120 are leucine-zipper; sequence LEKKVQSLESIQQQNEVEATFLRDQLITL. Disordered stretches follow at residues 149 to 169 and 183 to 251; these read HFSK…PNDD and QYPL…PNSS. Polar residues predominate over residues 150–162; that stretch reads FSKNNVNHSNSEP. T165 is subject to Phosphothreonine. Residues 195-209 are compositionally biased toward polar residues; that stretch reads SKNVGKQLPSPNDPS. S204 is subject to Phosphoserine. Residues 220–378 are transcription activation 1; sequence QKKLSDATDS…YENSFSGFGR (159 aa). Residues 226–246 show a composition bias toward low complexity; the sequence is ATDSSSATLDSLSNSNDVLNN. Residues 303-315 form a n-CRD region; that stretch reads CSKMNQVCGTRQC. Disulfide bonds link C303–C598, C310–C629, C598–C620, C598–C629, and C620–C629. Phosphoserine is present on S372. A compositionally biased stretch (low complexity) spans 392 to 414; the sequence is DNSTGSTDSTGSTGNKNKKNNNN. Disordered stretches follow at residues 392–419, 510–532, and 551–591; these read DNST…DDVL, LFGE…DDES, and LQSV…VPSK. The transcription activation 2 stretch occupies residues 430-537; the sequence is NQVTNFFSPG…SDDESSLIKN (108 aa). S528 carries the post-translational modification Phosphoserine. The span at 551–570 shows a compositional bias: polar residues; the sequence is LQSVPGNESEISQKNGSSLQ. Residues 571-580 show a composition bias toward low complexity; sequence NADKINNGND. Residues 598-629 are c-CRD; sequence CSEIWDRITTHPKYSDIDVDGLCSELMAKAKC. The short motif at 614–621 is the Nuclear export signal element; it reads IDVDGLCS.

Belongs to the bZIP family. YAP subfamily. As to quaternary structure, interacts independent of oxidation state in the cytoplasm with the karyopherin PSE1/KAP121 (and less strongly with KAP123). The reduced form of YAP1 interacts in the nucleus with the nuclear export protein CRM1, and in the cytoplasm with YBP1 and the peroxiredoxin HYR1/GPX3/ORP1. Interacts with RBG1. In terms of processing, depending on the oxidative stress inducing agent, YAP1 can undergo two distinct conformational changes, both involving disulfide bond formation, and both masking the nuclear export signal, thus abolishing nuclear export by CRM1/exportin 1. The disulfide stress-inducing agent diamide leads to the formation of one of three possible disulfide bonds in the c-CRD. Peroxide stress induces the formation of the HYR1/GPX3- and YBP1-dependent interdomain disulfide bond between Cys-303 and Cys-598 (causing nuclear localization of YAP1), and the possibly stabilizing bond between Cys-310 and Cys-629 (required for full activity of YAP1).

The protein localises to the nucleus. It localises to the cytoplasm. Transcription activator involved in oxidative stress response and redox homeostasis. Regulates the transcription of genes encoding antioxidant enzymes and components of the cellular thiol-reducing pathways, including the thioredoxin system (TRX2, TRR1), the glutaredoxin system (GSH1, GLR1), superoxide dismutase (SOD1, SOD2), glutathione peroxidase (GPX2), and thiol-specific peroxidases (TSA1, AHP1). The induction of some of these genes requires the cooperative action of both, YAP1 and SKN7. Preferentially binds to promoters with the core binding site 5'-TTA[CG]TAA-3'. Activity of the transcription factor is controlled through oxidation of specific cysteine residues resulting in the alteration of its subcellular location. Oxidative stress (as well as carbon stress, but not increased temperature, acidic pH, or ionic stress) induces nuclear accumulation and as a result YAP1 transcriptional activity. Activation by hydrogen peroxide or thiol-reactive chemicals elicit distinct adaptive gene responses. Nuclear export is restored when disulfide bonds are reduced by thioredoxin (TRX2), whose expression is controlled by YAP1, providing a mechanism for negative autoregulation. When overexpressed, YAP1 confers pleiotropic drug-resistance and increases cellular tolerance to cadmium, iron chelators and zinc. This Saccharomyces cerevisiae (strain ATCC 204508 / S288c) (Baker's yeast) protein is AP-1-like transcription factor YAP1.